The sequence spans 133 residues: MLSQIKREGNRVVMLVNRRYTARGKNLPSSPKKVRPIADNIRGKSYIKAIAVLCSMPNKGAKLLEKVVKSAASNAMYHNKNLSEDMIFVKIVMVDDGRRRKKIWPRARGRADRLVNRNCHIFVEVDEKKDIKG.

The protein belongs to the universal ribosomal protein uL22 family. As to quaternary structure, part of the 50S ribosomal subunit.

Functionally, this protein binds specifically to 23S rRNA; its binding is stimulated by other ribosomal proteins, e.g. L4, L17, and L20. It is important during the early stages of 50S assembly. It makes multiple contacts with different domains of the 23S rRNA in the assembled 50S subunit and ribosome. The globular domain of the protein is located near the polypeptide exit tunnel on the outside of the subunit, while an extended beta-hairpin is found that lines the wall of the exit tunnel in the center of the 70S ribosome. This is Large ribosomal subunit protein uL22 from Borrelia garinii subsp. bavariensis (strain ATCC BAA-2496 / DSM 23469 / PBi) (Borreliella bavariensis).